Consider the following 123-residue polypeptide: MAENRRMKKVNAMLREAIAKVILKDVKHPKISNRWITITRVSLSRDLQSACVYVSIMPHENSQEETLAALKASAGFIAFQASKDLVLKYFPDLNFYVEDIFSPQDHIESLLLKIAEQDKKTNP.

The protein belongs to the RbfA family. As to quaternary structure, monomer. Binds 30S ribosomal subunits, but not 50S ribosomal subunits or 70S ribosomes.

The protein localises to the cytoplasm. In terms of biological role, one of several proteins that assist in the late maturation steps of the functional core of the 30S ribosomal subunit. Associates with free 30S ribosomal subunits (but not with 30S subunits that are part of 70S ribosomes or polysomes). Required for efficient processing of 16S rRNA. May interact with the 5'-terminal helix region of 16S rRNA. The protein is Ribosome-binding factor A of Chlamydia trachomatis serovar L2 (strain ATCC VR-902B / DSM 19102 / 434/Bu).